Reading from the N-terminus, the 140-residue chain is MDLNPLLYLQAFNNDATTFNTQGHILEQQSDPTYFDTFASAMQAYIDTKQGGNDEEGTIIIMDDEDFNDSESLEDFLQMMNDEELNDRFSSDDEPEERVNPHEVNFMEINLHRDNQYESSKAPQATFDITEFIKTEEDDD.

The protein belongs to the asfivirus D129L family.

This is an uncharacterized protein from African swine fever virus (isolate Pig/Kenya/KEN-50/1950) (ASFV).